Here is a 191-residue protein sequence, read N- to C-terminus: Gastrokine-3 (191 aa).

The N-terminal stretch at 1 to 30 (MPLHSLERDNMRRLIAPSILVTVFLVPALA) is a signal peptide. The N-linked (GlcNAc...) asparagine glycan is linked to asparagine 33. The BRICHOS domain maps to 63 to 155 (NSVQSEWDGV…LCRAVPTYFA (93 aa)). Cysteine 90 and cysteine 147 form a disulfide bridge.

Belongs to the gastrokine family. In terms of tissue distribution, expressed in stomach. Present in mucus cells at the base of antral glands, and Brunner glands of the duodenum. Present at lower levels in the mucus neck cell region of the fundus (at protein level).

The protein resides in the secreted. Its function is as follows. Inhibits gastric epithelial cell proliferation. The protein is Gastrokine-3 (Gkn3) of Mus musculus (Mouse).